The chain runs to 519 residues: Steroid 17-alpha-hydroxylase/17,20 lyase (519 aa).

Residue cysteine 455 coordinates heme.

The protein belongs to the cytochrome P450 family. It depends on heme as a cofactor.

It is found in the membrane. It catalyses the reaction a C21-steroid + reduced [NADPH--hemoprotein reductase] + O2 = a 17alpha-hydroxy-C21-steroid + oxidized [NADPH--hemoprotein reductase] + H2O + H(+). It carries out the reaction 17alpha-hydroxyprogesterone + reduced [NADPH--hemoprotein reductase] + O2 = androst-4-ene-3,17-dione + acetate + oxidized [NADPH--hemoprotein reductase] + H2O + 2 H(+). The enzyme catalyses 17alpha-hydroxypregnenolone + reduced [NADPH--hemoprotein reductase] + O2 = 3beta-hydroxyandrost-5-en-17-one + acetate + oxidized [NADPH--hemoprotein reductase] + H2O + 2 H(+). It participates in lipid metabolism; steroid biosynthesis. Functionally, conversion of pregnenolone and progesterone to their 17-alpha-hydroxylated products and subsequently to dehydroepiandrosterone (DHEA) and androstenedione. Catalyzes both the 17-alpha-hydroxylation and the 17,20-lyase reaction. The polypeptide is Steroid 17-alpha-hydroxylase/17,20 lyase (CYP17A1) (Rana dybowskii (Dybovsky's frog)).